The primary structure comprises 153 residues: Ribosome maturation factor RimP (153 aa).

This sequence belongs to the RimP family.

The protein resides in the cytoplasm. Required for maturation of 30S ribosomal subunits. In Marinomonas sp. (strain MWYL1), this protein is Ribosome maturation factor RimP.